We begin with the raw amino-acid sequence, 327 residues long: MAVPAKKRKMNFSEREVEIIVEELELKKHLLVNHFNAGVPLAAKSAAWHGILRRVNAVATCRRELPEVKKKWSDLKTEVRRKVAQVRAAVEGGEAPGPTEEDGAGGPGTGGGSGAGGPAVAPVLLTPMQQRICNLLGEATIISLPSTAEIHPVALGPTATAAAATVTLTQIPTETTYHTLEEGVVEYCTAEAPPPLPAEAPVEMMAQHADTSVKPQALKSRIALNSAKLIQEQRVTNLHVKEIAQHLEQQNDLLQMIRRSQEVQACAQERQAQAMEGTQAALSVLIQVLRPMIKDFRRYLQSNMPNPATASEPGQVAQNGQPDSIIQ.

The required for nuclear localization and apoptosis-inducing activity stretch occupies residues 1–70 (MAVPAKKRKM…CRRELPEVKK (70 aa)). The segment covering 88–98 (AAVEGGEAPGP) has biased composition (low complexity). Disordered regions lie at residues 88 to 118 (AAVE…AGGP) and 303 to 327 (NMPN…SIIQ). The span at 104 to 117 (AGGPGTGGGSGAGG) shows a compositional bias: gly residues. Residues 316–327 (VAQNGQPDSIIQ) are compositionally biased toward polar residues.

Belongs to the NAIF1 family. In terms of assembly, interacts with HARBI1.

Its subcellular location is the nucleus. Its function is as follows. Induces apoptosis. This chain is Nuclear apoptosis-inducing factor 1 (NAIF1), found in Bos taurus (Bovine).